Reading from the N-terminus, the 83-residue chain is MSGNTGERPFADIITSIRYWVIHSITIPSLFIAGWLFVSTGLAYDVFGSPRPNEYFTESRQEIPLITGRFNSLEQLDEFTRAL.

A helical membrane pass occupies residues Val-21–Trp-35. Position 23 (His-23) interacts with heme.

This sequence belongs to the PsbE/PsbF family. In terms of assembly, heterodimer of an alpha subunit and a beta subunit. PSII is composed of 1 copy each of membrane proteins PsbA, PsbB, PsbC, PsbD, PsbE, PsbF, PsbH, PsbI, PsbJ, PsbK, PsbL, PsbM, PsbT, PsbX, PsbY, PsbZ, Psb30/Ycf12, at least 3 peripheral proteins of the oxygen-evolving complex and a large number of cofactors. It forms dimeric complexes. Requires heme b as cofactor.

It is found in the plastid. The protein resides in the chloroplast thylakoid membrane. This b-type cytochrome is tightly associated with the reaction center of photosystem II (PSII). PSII is a light-driven water:plastoquinone oxidoreductase that uses light energy to abstract electrons from H(2)O, generating O(2) and a proton gradient subsequently used for ATP formation. It consists of a core antenna complex that captures photons, and an electron transfer chain that converts photonic excitation into a charge separation. The sequence is that of Cytochrome b559 subunit alpha from Zygnema circumcarinatum (Green alga).